A 115-amino-acid chain; its full sequence is Phosphoribosyl-AMP cyclohydrolase (115 aa).

A Mg(2+)-binding site is contributed by Asp80. Residue Cys81 participates in Zn(2+) binding. Residues Asp82 and Asp84 each contribute to the Mg(2+) site. Zn(2+) is bound by residues Cys97 and Cys104.

It belongs to the PRA-CH family. Homodimer. Mg(2+) serves as cofactor. The cofactor is Zn(2+).

It localises to the cytoplasm. The enzyme catalyses 1-(5-phospho-beta-D-ribosyl)-5'-AMP + H2O = 1-(5-phospho-beta-D-ribosyl)-5-[(5-phospho-beta-D-ribosylamino)methylideneamino]imidazole-4-carboxamide. Its pathway is amino-acid biosynthesis; L-histidine biosynthesis; L-histidine from 5-phospho-alpha-D-ribose 1-diphosphate: step 3/9. In terms of biological role, catalyzes the hydrolysis of the adenine ring of phosphoribosyl-AMP. The polypeptide is Phosphoribosyl-AMP cyclohydrolase (Nocardia farcinica (strain IFM 10152)).